The following is a 396-amino-acid chain: Period circadian protein (396 aa).

Disordered regions lie at residues 27-120 (VTAP…APPV), 167-188 (SGPGPGHGHGIKRGGSHSWEGE), 253-275 (GGNGNVGSGNGNNNQPSTNQYTQ), and 333-362 (SPSSTNTNPNRPHKHAHVHNSSEKPSTSQA). Residues 93-114 (GTSGTGNSGDGGGGGGANGTGS) are compositionally biased toward gly residues. The segment covering 253 to 262 (GGNGNVGSGN) has biased composition (gly residues). Residues 333-342 (SPSSTNTNPN) show a composition bias toward low complexity.

Forms a heterodimer with timeless (TIM); the complex then translocates into the nucleus. Phosphorylated with a circadian rhythmicity, probably by the double-time protein (dbt). Phosphorylation could be implicated in the stability of per monomer and in the formation of heterodimer per-tim.

It localises to the nucleus. It is found in the cytoplasm. The protein resides in the perinuclear region. Functionally, essential for biological clock functions. Determines the period length of circadian and ultradian rhythms; an increase in PER dosage leads to shortened circadian rhythms and a decrease leads to lengthened circadian rhythms. Essential for the circadian rhythmicity of locomotor activity, eclosion behavior, and for the rhythmic component of the male courtship song that originates in the thoracic nervous system. The biological cycle depends on the rhythmic formation and nuclear localization of the TIM-PER complex. Light induces the degradation of TIM, which promotes elimination of PER. Nuclear activity of the heterodimer coordinatively regulates PER and TIM transcription through a negative feedback loop. Behaves as a negative element in circadian transcriptional loop. Does not appear to bind DNA, suggesting indirect transcriptional inhibition. This chain is Period circadian protein (per), found in Drosophila paulistorum (Fruit fly).